We begin with the raw amino-acid sequence, 405 residues long: GTPase Obg (405 aa).

One can recognise an Obg domain in the interval 1–159 (MRFIDEAVVT…KVLKFELKVV (159 aa)). One can recognise an OBG-type G domain in the interval 160 to 333 (ADVGLIGLPN…IKYHLMNEIE (174 aa)). GTP contacts are provided by residues 166–173 (GLPNAGKS), 191–195 (FTTLV), 213–216 (DIPG), 283–286 (NKID), and 314–316 (ATL). S173 and T193 together coordinate Mg(2+). Positions 371 to 382 (YRAARKAAREGT) are enriched in basic and acidic residues. Residues 371–405 (YRAARKAAREGTDLSDDDFDDSDDDDDGVEVVYAP) form a disordered region. Positions 383-399 (DLSDDDFDDSDDDDDGV) are enriched in acidic residues.

This sequence belongs to the TRAFAC class OBG-HflX-like GTPase superfamily. OBG GTPase family. Monomer. Requires Mg(2+) as cofactor.

The protein resides in the cytoplasm. In terms of biological role, an essential GTPase which binds GTP, GDP and possibly (p)ppGpp with moderate affinity, with high nucleotide exchange rates and a fairly low GTP hydrolysis rate. Plays a role in control of the cell cycle, stress response, ribosome biogenesis and in those bacteria that undergo differentiation, in morphogenesis control. The sequence is that of GTPase Obg from Psychrobacter cryohalolentis (strain ATCC BAA-1226 / DSM 17306 / VKM B-2378 / K5).